Consider the following 495-residue polypeptide: Trigger factor (495 aa).

The region spanning 162-243 (DDFVSIDLSA…VKSLKERELP (82 aa)) is the PPIase FKBP-type domain. The segment covering 425–437 (DTDGNEIDPKEYF) has biased composition (basic and acidic residues). Residues 425–495 (DTDGNEIDPK…TDDDSENAEK (71 aa)) form a disordered region. The segment covering 450–461 (SADAEASENSEA) has biased composition (low complexity). Over residues 486–495 (TDDDSENAEK) the composition is skewed to acidic residues.

The protein belongs to the FKBP-type PPIase family. Tig subfamily.

It localises to the cytoplasm. The catalysed reaction is [protein]-peptidylproline (omega=180) = [protein]-peptidylproline (omega=0). Its function is as follows. Involved in protein export. Acts as a chaperone by maintaining the newly synthesized protein in an open conformation. Functions as a peptidyl-prolyl cis-trans isomerase. This chain is Trigger factor, found in Corynebacterium kroppenstedtii (strain DSM 44385 / JCM 11950 / CIP 105744 / CCUG 35717).